A 239-amino-acid chain; its full sequence is MLPIIGIAGNQLIRATDTFQGNQVTYTPQGFVNAVQQADGLPIVLPISSPKTASAYIDQIDKLILAGGQDISPQLYHEPPHPKLLETNLQRDLFEAALISEALKQNKPIFAVCRGMQLLNVVLGGSLYQDLTTYPKWSVKHEQHPTAPQFATHEVEILPDTLLYQLLPDTYLVNSYHHQALKELAPSLKATAFSPDGLVEGIESLDKDVRLFGVQWHPELTHSSNSTDQGLFDFFVQEF.

The region spanning 12-239 is the Glutamine amidotransferase type-1 domain; that stretch reads LIRATDTFQG…GLFDFFVQEF (228 aa). C113 serves as the catalytic Nucleophile. Active-site residues include H217 and E219.

This is Protein NtpR (ntpR) from Enterococcus hirae (strain ATCC 9790 / DSM 20160 / JCM 8729 / LMG 6399 / NBRC 3181 / NCIMB 6459 / NCDO 1258 / NCTC 12367 / WDCM 00089 / R).